A 92-amino-acid polypeptide reads, in one-letter code: Small ribosomal subunit protein uS19 (92 aa).

The segment at 72-92 (GEFSPTRTYTGHGSDKKSKRG) is disordered.

This sequence belongs to the universal ribosomal protein uS19 family.

Protein S19 forms a complex with S13 that binds strongly to the 16S ribosomal RNA. This is Small ribosomal subunit protein uS19 from Gluconobacter oxydans (strain 621H) (Gluconobacter suboxydans).